An 837-amino-acid polypeptide reads, in one-letter code: Intestinal mucin-like protein (837 aa).

4 tandem repeats follow at residues 17–27 (PSTPSTPPPST), 28–38 (PTTPTSSQTTT), 39–50 (PSTPSTTSSKST), and 51–62 (PSTPQSTSSKST). Residues 17 to 70 (PSTPSTPPPSTPTTPTSSQTTTPSTPSTTSSKSTPSTPQSTSSKSTPSTPPKTT) form a 5 X 11 AA approximate tandem repeats region. The segment at 17–75 (PSTPSTPPPSTPTTPTSSQTTTPSTPSTTSSKSTPSTPQSTSSKSTPSTPPKTTLPGCL) is disordered. Residues 29 to 70 (TTPTSSQTTTPSTPSTTSSKSTPSTPQSTSSKSTPSTPPKTT) are compositionally biased toward low complexity. One copy of the 5; truncated repeat lies at 63–70 (PSTPPKTT). 2 N-linked (GlcNAc...) asparagine glycosylation sites follow: asparagine 91 and asparagine 164. The 184-residue stretch at 141-324 (CYCTGWGDPH…VNDPSKPHCP (184 aa)) folds into the VWFD domain. 3 cysteine pairs are disulfide-bonded: cysteine 143-cysteine 284, cysteine 165-cysteine 323, and cysteine 189-cysteine 197. The segment at 149–837 (PHFVTFDGLY…RSSPRLLGRK (689 aa)) is probably important for disulfide-bond mediated mucin polymerization (link domain). Asparagine 278, asparagine 289, asparagine 344, asparagine 410, asparagine 444, asparagine 515, asparagine 538, asparagine 612, asparagine 627, asparagine 695, asparagine 727, and asparagine 749 each carry an N-linked (GlcNAc...) asparagine glycan. 2 consecutive VWFC domains span residues 472–543 (CGCV…TSCK) and 581–648 (GVCV…KKCQ). 4 cysteine pairs are disulfide-bonded: cysteine 732-cysteine 779, cysteine 746-cysteine 793, cysteine 755-cysteine 809, and cysteine 759-cysteine 811. Positions 732-817 (CSAIPVMKEI…SCLCQGTVCE (86 aa)) constitute a CTCK domain.

In terms of assembly, multimeric. As to expression, coats the epithelia of the intestines.

It localises to the secreted. The polypeptide is Intestinal mucin-like protein (Rattus norvegicus (Rat)).